The sequence spans 181 residues: MRGTWSMSVPSDGRNVVLTGFMGTGKSTVGKLLARRLGYRFSDLDALIVERAGISINEIFERYGEQRFRELETEAIRSLGGVSGRVVATGGGAVIAPRNRVLLREAGLVVNLTASLEVILSRLKGDRERPLLKSNNTPEALAALMTARENAYADADLRIDTAGKSVEDVVTEIATFVREHQ.

Residue 23–28 (GTGKST) coordinates ATP. S27 is a binding site for Mg(2+). Substrate is bound by residues D45, R69, and G91. An ATP-binding site is contributed by R129. R148 is a substrate binding site.

It belongs to the shikimate kinase family. In terms of assembly, monomer. Requires Mg(2+) as cofactor.

The protein localises to the cytoplasm. The enzyme catalyses shikimate + ATP = 3-phosphoshikimate + ADP + H(+). It functions in the pathway metabolic intermediate biosynthesis; chorismate biosynthesis; chorismate from D-erythrose 4-phosphate and phosphoenolpyruvate: step 5/7. Its function is as follows. Catalyzes the specific phosphorylation of the 3-hydroxyl group of shikimic acid using ATP as a cosubstrate. The polypeptide is Shikimate kinase (Geobacter sulfurreducens (strain ATCC 51573 / DSM 12127 / PCA)).